We begin with the raw amino-acid sequence, 381 residues long: Beta-lactamase CMY-4 (381 aa).

The signal sequence occupies residues 1 to 20; the sequence is MMKKSLCCALLLTASFSTFA. Ser-84 (acyl-ester intermediate) is an active-site residue. A beta-lactam is bound by residues Ser-84, Gln-140, Tyr-170, and Asn-172.

Belongs to the class-C beta-lactamase family.

The catalysed reaction is a beta-lactam + H2O = a substituted beta-amino acid. Its function is as follows. Class C beta-lactamase which confers resistance to penicillins and cephalosporins. This chain is Beta-lactamase CMY-4, found in Klebsiella pneumoniae.